A 264-amino-acid chain; its full sequence is Acyl-[acyl-carrier-protein]--UDP-N-acetylglucosamine O-acyltransferase (264 aa).

This sequence belongs to the transferase hexapeptide repeat family. LpxA subfamily. Homotrimer.

It is found in the cytoplasm. The catalysed reaction is a (3R)-hydroxyacyl-[ACP] + UDP-N-acetyl-alpha-D-glucosamine = a UDP-3-O-[(3R)-3-hydroxyacyl]-N-acetyl-alpha-D-glucosamine + holo-[ACP]. It participates in glycolipid biosynthesis; lipid IV(A) biosynthesis; lipid IV(A) from (3R)-3-hydroxytetradecanoyl-[acyl-carrier-protein] and UDP-N-acetyl-alpha-D-glucosamine: step 1/6. In terms of biological role, involved in the biosynthesis of lipid A, a phosphorylated glycolipid that anchors the lipopolysaccharide to the outer membrane of the cell. The polypeptide is Acyl-[acyl-carrier-protein]--UDP-N-acetylglucosamine O-acyltransferase (Chlorobaculum tepidum (strain ATCC 49652 / DSM 12025 / NBRC 103806 / TLS) (Chlorobium tepidum)).